The primary structure comprises 99 residues: Cell division protein FtsB (99 aa).

Residues 1 to 3 are Cytoplasmic-facing; the sequence is MKF. A helical transmembrane segment spans residues 4–21; it reads FVIALIVLLGLLQYRLWS. Residues 22 to 99 are Periplasmic-facing; the sequence is GSNSLPEYFV…GERSVSSPSQ (78 aa). Residues 36 to 73 are a coiled coil; sequence IAVQQEGNDKLNERNQVLKEEIIDLKSGTEAIEERARN.

Belongs to the FtsB family. In terms of assembly, part of a complex composed of FtsB, FtsL and FtsQ.

The protein resides in the cell inner membrane. Functionally, essential cell division protein. May link together the upstream cell division proteins, which are predominantly cytoplasmic, with the downstream cell division proteins, which are predominantly periplasmic. This Shewanella sp. (strain W3-18-1) protein is Cell division protein FtsB.